The chain runs to 96 residues: Mapk-regulated corepressor-interacting protein 1 (96 aa).

2 disordered regions span residues 1–28 and 76–96; these read MASS…GSEI and AFKP…AKKS. The PXDLS motif motif lies at 79–83; sequence PVDLS. Positions 81-96 are enriched in basic and acidic residues; it reads DLSDLKRRNTQDAKKS.

The protein belongs to the MCRIP family.

It is found in the nucleus. It localises to the cytoplasm. Its subcellular location is the stress granule. Functionally, may play a role in the regulation of the epithelial-mesenchymal transition. In Gallus gallus (Chicken), this protein is Mapk-regulated corepressor-interacting protein 1 (MCRIP1).